The following is a 1019-amino-acid chain: Antigenic heat-stable 120 kDa protein (1019 aa).

Residues Met1–Glu33 form a disordered region. Basic and acidic residues predominate over residues Pro14–Lys24.

The protein localises to the cytoplasm. This chain is Antigenic heat-stable 120 kDa protein (sca4), found in Rickettsia typhi (strain ATCC VR-144 / Wilmington).